The primary structure comprises 662 residues: Glutathione hydrolase 7 (662 aa).

Over methionine 1–glycine 106 the chain is Cytoplasmic. 4 positions are modified to phosphoserine: serine 17, serine 72, serine 79, and serine 83. The disordered stretch occupies residues serine 26–lysine 90. The span at serine 72 to serine 83 shows a compositional bias: low complexity. Residues leucine 107 to methionine 127 traverse the membrane as a helical; Signal-anchor for type II membrane protein segment. The Extracellular segment spans residues glutamine 128–leucine 662. N-linked (GlcNAc...) asparagine glycosylation is found at asparagine 198, asparagine 267, asparagine 283, asparagine 330, asparagine 353, asparagine 394, asparagine 519, asparagine 523, and asparagine 586.

The protein belongs to the gamma-glutamyltransferase family. As to quaternary structure, heterodimer composed of the light and heavy chains. The active site is located in the light chain. Post-translationally, cleaved by autocatalysis into a large and a small subunit and the autocatalytic cleavage is essential to the functional activation of the enzyme.

Its subcellular location is the membrane. It catalyses the reaction an N-terminal (5-L-glutamyl)-[peptide] + an alpha-amino acid = 5-L-glutamyl amino acid + an N-terminal L-alpha-aminoacyl-[peptide]. It carries out the reaction glutathione + H2O = L-cysteinylglycine + L-glutamate. The catalysed reaction is an S-substituted glutathione + H2O = an S-substituted L-cysteinylglycine + L-glutamate. It functions in the pathway sulfur metabolism; glutathione metabolism. Hydrolyzes and transfers gamma-glutamyl moieties from glutathione and other gamma-glutamyl compounds to acceptors. In Rattus norvegicus (Rat), this protein is Glutathione hydrolase 7.